A 129-amino-acid polypeptide reads, in one-letter code: Phosphoribosyl-AMP cyclohydrolase (129 aa).

Position 87 (Asp87) interacts with Mg(2+). Residue Cys88 coordinates Zn(2+). Mg(2+) is bound by residues Asp89 and Asp91. The Zn(2+) site is built by Cys104 and Cys111.

The protein belongs to the PRA-CH family. In terms of assembly, homodimer. The cofactor is Mg(2+). It depends on Zn(2+) as a cofactor.

Its subcellular location is the cytoplasm. The catalysed reaction is 1-(5-phospho-beta-D-ribosyl)-5'-AMP + H2O = 1-(5-phospho-beta-D-ribosyl)-5-[(5-phospho-beta-D-ribosylamino)methylideneamino]imidazole-4-carboxamide. It participates in amino-acid biosynthesis; L-histidine biosynthesis; L-histidine from 5-phospho-alpha-D-ribose 1-diphosphate: step 3/9. Functionally, catalyzes the hydrolysis of the adenine ring of phosphoribosyl-AMP. The protein is Phosphoribosyl-AMP cyclohydrolase of Ruegeria sp. (strain TM1040) (Silicibacter sp.).